A 1441-amino-acid chain; its full sequence is ABC transporter G family member 41 (1441 aa).

Over residues 1–14 (MEDKKQQQQQQREE) the composition is skewed to basic and acidic residues. Residues 1–28 (MEDKKQQQQQQREEAEAEEEAPVVPSSL) form a disordered region. The ABC transporter 1 domain occupies 159-432 (ATARGLSRRP…FESCGFKCPE (274 aa)). 192–199 (GPPGCGKT) is an ATP binding site. Positions 510 to 722 (DLLKACFARE…AEIGLTGNEF (213 aa)) constitute an ABC transmembrane type-2 1 domain. Helical transmembrane passes span 528–548 (FIYI…GTVF), 566–586 (SLFY…AIAV), 600–620 (FYPA…LSLV), 642–662 (FFCQ…LFRC), 672–692 (ASSV…GFII), and 758–778 (ASAL…GLTI). Residues 838–1090 (ISFQDVNYYV…NVIHYFETIP (253 aa)) enclose the ABC transporter 2 domain. 883–890 (GVTGAGKT) provides a ligand contact to ATP. Residues 1163–1379 (EQLKACIWKQ…TLNVFFTTQF (217 aa)) form the ABC transmembrane type-2 2 domain. The next 7 helical transmembrane spans lie at 1187–1207 (ILFI…QGDI), 1215–1235 (GLFT…INNC), 1272–1292 (IPYV…MIGY), 1300–1320 (FWFM…GMMI), 1329–1349 (VASI…GFIV), 1357–1377 (WWIW…FFTT), and 1413–1433 (LAAI…GLSI).

It belongs to the ABC transporter superfamily. ABCG family. PDR (TC 3.A.1.205) subfamily.

It localises to the membrane. Functionally, may be a general defense protein. This chain is ABC transporter G family member 41, found in Oryza sativa subsp. japonica (Rice).